The chain runs to 387 residues: Peroxisomal membrane protein LPX1 (387 aa).

Residues 385–387 are peroxisomal targeting signal type 1; sequence QKL.

Its subcellular location is the peroxisome matrix. Has acyl esterase, lipase and phospholipase A activity. This is Peroxisomal membrane protein LPX1 (LPX1) from Saccharomyces cerevisiae (strain ATCC 204508 / S288c) (Baker's yeast).